The chain runs to 72 residues: Protein RALF-like 11 (72 aa).

The first 17 residues, 1-17, serve as a signal peptide directing secretion; it reads MKAWLICLLVICAAVIA. 2 cysteine pairs are disulfide-bonded: Cys34–Cys43 and Cys63–Cys69.

The protein belongs to the plant rapid alkalinization factor (RALF) family.

It localises to the secreted. Its function is as follows. Cell signaling peptide that may regulate plant stress, growth, and development. Mediates a rapid alkalinization of extracellular space by mediating a transient increase in the cytoplasmic Ca(2+) concentration leading to a calcium-dependent signaling events through a cell surface receptor and a concomitant activation of some intracellular mitogen-activated protein kinases. In Arabidopsis thaliana (Mouse-ear cress), this protein is Protein RALF-like 11 (RALFL11).